Here is a 458-residue protein sequence, read N- to C-terminus: MEGGPEQLHLGKALEEAGGGRALAEIQELALKWFMETQAPSILQNGVLPPWFHGFITRKQTEQLLRDKALGSFLIRLSDRAVGYILSYRGSDRCRHFVINQLRNRRYLVSGDTLSHSTLDELLRHYQEVQLEPFGETLAAACPRLEENDLYDAINTGLQHTNLSLKIPATEFPSMLPDKATSPRLPAKPQVSFLHKKALDMSSRSVSDEVSAEVPTRVPPIPRRSPSLLDESPAGPSDVIYTDLRKINRAQLGLGTEVWGTLRPASAGSLACSPGREPSGKLSDEDQNKPNSLGPAPSGMKPDQGSTMPYTSLGFSLPPSSETLGSQATTWRQGFLKLSHEAQSSSEASSTDTYHLVETPGLQQEARDRPDQRGSPYEQIPTCWHGTAKLSYPGVSPTYSQQSGPMDYGYEKISGTSKLPEPGNTYEQIPAAKNKDTGRVHKPDKFRRLFFTDKKHKF.

Residues 51–142 (WFHGFITRKQ…PFGETLAAAC (92 aa)) enclose the SH2 domain. Disordered regions lie at residues 204-235 (RSVSDEVSAEVPTRVPPIPRRSPSLLDESPAG) and 267-326 (AGSL…TLGS). Over residues 278 to 288 (PSGKLSDEDQN) the composition is skewed to basic and acidic residues. Over residues 304–326 (QGSTMPYTSLGFSLPPSSETLGS) the composition is skewed to polar residues.

The polypeptide is SH2 domain-containing protein 7 (Sh2d7) (Mus musculus (Mouse)).